A 479-amino-acid chain; its full sequence is ATP synthase subunit beta (479 aa).

G168–T175 is a binding site for ATP.

The protein belongs to the ATPase alpha/beta chains family. As to quaternary structure, F-type ATPases have 2 components, CF(1) - the catalytic core - and CF(0) - the membrane proton channel. CF(1) has five subunits: alpha(3), beta(3), gamma(1), delta(1), epsilon(1). CF(0) has three main subunits: a(1), b(2) and c(9-12). The alpha and beta chains form an alternating ring which encloses part of the gamma chain. CF(1) is attached to CF(0) by a central stalk formed by the gamma and epsilon chains, while a peripheral stalk is formed by the delta and b chains.

It localises to the cell membrane. The catalysed reaction is ATP + H2O + 4 H(+)(in) = ADP + phosphate + 5 H(+)(out). Produces ATP from ADP in the presence of a proton gradient across the membrane. The catalytic sites are hosted primarily by the beta subunits. This chain is ATP synthase subunit beta, found in Parafrankia sp. (strain EAN1pec).